Reading from the N-terminus, the 699-residue chain is Osmotic avoidance abnormal protein 3 (699 aa).

The Kinesin motor domain maps to 4–327; it reads SVRVAVRCRP…LRYANRAKNI (324 aa). An ATP-binding site is contributed by 87–94; that stretch reads GQTGSGKT. Residues 339 to 523 adopt a coiled-coil conformation; the sequence is DALLREYQEE…EIEDLHGEFE (185 aa).

Belongs to the TRAFAC class myosin-kinesin ATPase superfamily. Kinesin family. Kinesin II subfamily. As to expression, expressed in an exclusive set of 26 chemosensory neurons whose dendritic endings are exposed to the external environment; six IL2 neurons of the inner labial sensilla, 8 pairs of amphid neurons in the head, and 2 pairs of phasmid neurons in the tail.

The protein resides in the cytoplasm. It is found in the cytoskeleton. Its subcellular location is the cell projection. It localises to the cilium. The protein localises to the cilium axoneme. The protein resides in the cilium basal body. In terms of biological role, kinesin motor protein which is required for the anterograde intraflagellar transport (IFT) along the middle segment of the sensory neuron cilia together with the kinesin II motor complex (composed of klp-11, klp-20 and kap-1) and on its own, is required for IFT along the distal segment. In addition, regulates the length of cilia. May have a role during neurogenesis and axonal transport. The protein is Osmotic avoidance abnormal protein 3 of Caenorhabditis elegans.